The following is a 141-amino-acid chain: Cystatin (141 aa).

The signal sequence occupies residues 1–26 (MVHFQLPVAAPLCLLCALLLLPSATM). One can recognise a Cystatin domain in the interval 29-129 (GGLSPRSVSD…CHFQVWSRPW (101 aa)). The Secondary area of contact signature appears at 73–77 (QVVAG). Intrachain disulfides connect C91-C107 and C120-C140.

It belongs to the cystatin family. As to expression, expressed at a low level by the venom gland (at protein level).

It localises to the secreted. Functionally, inhibits various C1 cysteine proteases including cathepsin L, papain and cathepsin B. This protein has no toxic activity and its function in the venom is unknown. It may play a role as a housekeeping or regulatory protein. In Naja kaouthia (Monocled cobra), this protein is Cystatin.